Consider the following 204-residue polypeptide: Large ribosomal subunit protein uL4 (204 aa).

The tract at residues 52–76 (AEVRGGGKKPWAQKGGGRARAGSRR) is disordered.

Belongs to the universal ribosomal protein uL4 family. As to quaternary structure, part of the 50S ribosomal subunit.

In terms of biological role, one of the primary rRNA binding proteins, this protein initially binds near the 5'-end of the 23S rRNA. It is important during the early stages of 50S assembly. It makes multiple contacts with different domains of the 23S rRNA in the assembled 50S subunit and ribosome. Functionally, forms part of the polypeptide exit tunnel. This is Large ribosomal subunit protein uL4 from Sulfurimonas denitrificans (strain ATCC 33889 / DSM 1251) (Thiomicrospira denitrificans (strain ATCC 33889 / DSM 1251)).